We begin with the raw amino-acid sequence, 150 residues long: Cytochrome c oxidase subunit 5A, mitochondrial (150 aa).

The N-terminal 41 residues, 1-41 (MLGAALRRCAVAATTRAGPRGLLHSARTPGPAAAIQSVRCX), are a transit peptide targeting the mitochondrion. Residues 2 to 17 (LGAALRRCAVAATTRA) carry the SIFI-degron motif. Residues Lys87 and Lys113 each carry the N6-acetyllysine modification. Thr141 carries the post-translational modification Phosphothreonine.

Belongs to the cytochrome c oxidase subunit 5A family. As to quaternary structure, component of the cytochrome c oxidase (complex IV, CIV), a multisubunit enzyme composed of 14 subunits. The complex is composed of a catalytic core of 3 subunits MT-CO1, MT-CO2 and MT-CO3, encoded in the mitochondrial DNA, and 11 supernumerary subunits COX4I, COX5A, COX5B, COX6A, COX6B, COX6C, COX7A, COX7B, COX7C, COX8 and NDUFA4, which are encoded in the nuclear genome. The complex exists as a monomer or a dimer and forms supercomplexes (SCs) in the inner mitochondrial membrane with NADH-ubiquinone oxidoreductase (complex I, CI) and ubiquinol-cytochrome c oxidoreductase (cytochrome b-c1 complex, complex III, CIII), resulting in different assemblies (supercomplex SCI(1)III(2)IV(1) and megacomplex MCI(2)III(2)IV(2)). Interacts with AFG1L. Interacts with RAB5IF. Post-translationally, in response to mitochondrial stress, the precursor protein is ubiquitinated by the SIFI complex in the cytoplasm before mitochondrial import, leading to its degradation. Within the SIFI complex, UBR4 initiates ubiquitin chain that are further elongated or branched by KCMF1.

The protein localises to the mitochondrion inner membrane. It functions in the pathway energy metabolism; oxidative phosphorylation. Component of the cytochrome c oxidase, the last enzyme in the mitochondrial electron transport chain which drives oxidative phosphorylation. The respiratory chain contains 3 multisubunit complexes succinate dehydrogenase (complex II, CII), ubiquinol-cytochrome c oxidoreductase (cytochrome b-c1 complex, complex III, CIII) and cytochrome c oxidase (complex IV, CIV), that cooperate to transfer electrons derived from NADH and succinate to molecular oxygen, creating an electrochemical gradient over the inner membrane that drives transmembrane transport and the ATP synthase. Cytochrome c oxidase is the component of the respiratory chain that catalyzes the reduction of oxygen to water. Electrons originating from reduced cytochrome c in the intermembrane space (IMS) are transferred via the dinuclear copper A center (CU(A)) of subunit 2 and heme A of subunit 1 to the active site in subunit 1, a binuclear center (BNC) formed by heme A3 and copper B (CU(B)). The BNC reduces molecular oxygen to 2 water molecules using 4 electrons from cytochrome c in the IMS and 4 protons from the mitochondrial matrix. The protein is Cytochrome c oxidase subunit 5A, mitochondrial (COX5A) of Pan paniscus (Pygmy chimpanzee).